Here is a 98-residue protein sequence, read N- to C-terminus: MSLTYMNMFLAFTISLVGLLMYRSHMMSALLCLEGMMLSLFVMMTITILNIHLTLASMTPIILLVFAACEAALGLSLLVMVSTTYGMDYVQNLNLLQC.

The next 3 helical transmembrane spans lie at 1-21, 29-49, and 61-81; these read MSLTYMNMFLAFTISLVGLLM, ALLCLEGMMLSLFVMMTITIL, and IILLVFAACEAALGLSLLVMV.

This sequence belongs to the complex I subunit 4L family. As to quaternary structure, core subunit of respiratory chain NADH dehydrogenase (Complex I) which is composed of 45 different subunits.

Its subcellular location is the mitochondrion inner membrane. The enzyme catalyses a ubiquinone + NADH + 5 H(+)(in) = a ubiquinol + NAD(+) + 4 H(+)(out). Core subunit of the mitochondrial membrane respiratory chain NADH dehydrogenase (Complex I) which catalyzes electron transfer from NADH through the respiratory chain, using ubiquinone as an electron acceptor. Part of the enzyme membrane arm which is embedded in the lipid bilayer and involved in proton translocation. The polypeptide is NADH-ubiquinone oxidoreductase chain 4L (MT-ND4L) (Rhinophylla pumilio (Dwarf little fruit bat)).